We begin with the raw amino-acid sequence, 212 residues long: Metalloproteinase inhibitor 3 (212 aa).

The N-terminal stretch at 1 to 24 (MTAWLGFLAVFLCSWSLRDLVAEA) is a signal peptide. Zn(2+) is bound at residue Cys-25. Involved in metalloproteinase-binding stretches follow at residues 25 to 28 (CTCV) and 89 to 90 (ES). 6 cysteine pairs are disulfide-bonded: Cys-25/Cys-92, Cys-27/Cys-119, Cys-37/Cys-144, Cys-146/Cys-193, Cys-151/Cys-156, and Cys-164/Cys-185. Positions 25 to 144 (CTCVPIHPQD…GLNHRYHLGC (120 aa)) constitute an NTR domain.

This sequence belongs to the protease inhibitor I35 (TIMP) family.

It is found in the secreted. It localises to the extracellular space. The protein localises to the extracellular matrix. Complexes with metalloproteinases (such as collagenases) and irreversibly inactivates them by binding to their catalytic zinc cofactor. May form part of a tissue-specific acute response to remodeling stimuli. The polypeptide is Metalloproteinase inhibitor 3 (TIMP3) (Gallus gallus (Chicken)).